Reading from the N-terminus, the 214-residue chain is Large ribosomal subunit protein uL3 (214 aa).

A disordered region spans residues 133-154 (GLGAGHGTQRKHRSPGSIGGCA).

The protein belongs to the universal ribosomal protein uL3 family. In terms of assembly, part of the 50S ribosomal subunit. Forms a cluster with proteins L14 and L19.

Its function is as follows. One of the primary rRNA binding proteins, it binds directly near the 3'-end of the 23S rRNA, where it nucleates assembly of the 50S subunit. This chain is Large ribosomal subunit protein uL3, found in Streptomyces avermitilis (strain ATCC 31267 / DSM 46492 / JCM 5070 / NBRC 14893 / NCIMB 12804 / NRRL 8165 / MA-4680).